Consider the following 215-residue polypeptide: 3,4-dihydroxy-2-butanone 4-phosphate synthase (215 aa).

Residues 38 to 39, Asp43, 151 to 155, and Glu175 each bind D-ribulose 5-phosphate; these read RE and RRGHT. Glu39 is a binding site for Mg(2+). His154 lines the Mg(2+) pocket.

This sequence belongs to the DHBP synthase family. As to quaternary structure, homodimer. The cofactor is Mg(2+). Requires Mn(2+) as cofactor.

The enzyme catalyses D-ribulose 5-phosphate = (2S)-2-hydroxy-3-oxobutyl phosphate + formate + H(+). It participates in cofactor biosynthesis; riboflavin biosynthesis; 2-hydroxy-3-oxobutyl phosphate from D-ribulose 5-phosphate: step 1/1. Functionally, catalyzes the conversion of D-ribulose 5-phosphate to formate and 3,4-dihydroxy-2-butanone 4-phosphate. This chain is 3,4-dihydroxy-2-butanone 4-phosphate synthase, found in Haemophilus influenzae (strain ATCC 51907 / DSM 11121 / KW20 / Rd).